The sequence spans 397 residues: Elongation factor Tu (397 aa).

The region spanning 10–206 (KPHVNIGTIG…AVDDNVPEPE (197 aa)) is the tr-type G domain. The tract at residues 19 to 26 (GHVDHGKT) is G1. A GTP-binding site is contributed by 19–26 (GHVDHGKT). Thr-26 contributes to the Mg(2+) binding site. The G2 stretch occupies residues 62-66 (GITIN). A G3 region spans residues 83–86 (DAPG). GTP-binding positions include 83 to 87 (DAPGH) and 138 to 141 (NKSD). Positions 138–141 (NKSD) are G4. The segment at 176–178 (SAL) is G5.

This sequence belongs to the TRAFAC class translation factor GTPase superfamily. Classic translation factor GTPase family. EF-Tu/EF-1A subfamily. Monomer.

The protein localises to the cytoplasm. The catalysed reaction is GTP + H2O = GDP + phosphate + H(+). GTP hydrolase that promotes the GTP-dependent binding of aminoacyl-tRNA to the A-site of ribosomes during protein biosynthesis. This Brevibacterium linens protein is Elongation factor Tu.